A 188-amino-acid chain; its full sequence is dCTP deaminase (188 aa).

DCTP is bound by residues 111 to 116 (KSTYAR), 135 to 137 (TLE), Gln156, Tyr170, Lys179, and Gln180. The active-site Proton donor/acceptor is Glu137.

The protein belongs to the dCTP deaminase family. In terms of assembly, homotrimer.

It catalyses the reaction dCTP + H2O + H(+) = dUTP + NH4(+). It participates in pyrimidine metabolism; dUMP biosynthesis; dUMP from dCTP (dUTP route): step 1/2. Its function is as follows. Catalyzes the deamination of dCTP to dUTP. In Rickettsia typhi (strain ATCC VR-144 / Wilmington), this protein is dCTP deaminase.